The chain runs to 938 residues: MSSSSVSNTLSIETKSDPKDPAFVASQESTECNEHDTTQLSGSSSEPLENNSSLTRSTDDPSVEIRSKLVSPDNEANLLSDQNITISNENNNENDTTEEAETSSGNEAADDEDSSSDAQSSVPSFSEIHDGMSEEELDKERKTLTHLRRISLQGADDPEIPTDWSVAMSPPETEQDASTLFWVPANLHPELNPTGWKSFLDLQVKNLKSPTATDTSSSPLEHIRSLRRRKSLLSRQVKADDAVINYQDGSPIVEKAYLKRHRSLRLNELEHLESLARDPHRMVSLVDGMSNGSPEDSPLLVSPNHFLQRSSRTTIRRTGASIRTIHRGKTSTLSGNRSHSILQKPTDTSPLHKIEPISADELVESDDSRTSALSNSQNPSDDVENQSDQALEVLSLTNPPKIDNASADTTLHKETNKIDKLYVSENKAESAVASESSLSEGTLALKAPAPENKPEKSSTSKPPVPENKAEDSVVLKSSVPEDKSENSIASKPSATEGIPENAIALQSSVPENKAEDSVVLKSSVPEDKSEDSVPSKSSVLEDKHENSVEIDKKADDSLPSNNKTEGYTPSVVREEKNYSEPNASPSVIPPRVPTPVPGRTLSPKPTRIPTPIPSSLNVSLESSKKPEIFHERHIPTPETGPNKPSKNNILKSTQVPVTPKQKSSTANKGSTSSPSPPSSESKKTKRSWGRLFVSGDSDKEHKEHKKDKQKKKNDQISSSSKSASSFKKDRDKESIFGSLFGSKKKQTEIPPVSSSPPHNDAPPKAKPISAPSELPNTTSVAEAKCQTVTDDEGTDQQSDEKSTEPKTFIPDKDYYWSRFPICTERAIYRLSHIKLSNAHRPLFQQVLLSNFMYSYLDLISRISSNRPMNNVQQSTAKPIRKDINGQQRRSEFSAENVKNELENLSYQFGDQRKRNLNRKGSTIHTVSQNIQKVSKNAK.

Positions 1 to 13 (MSSSSVSNTLSIE) are enriched in polar residues. Disordered regions lie at residues 1–140 (MSSS…LDKE), 326–386 (HRGK…VENQ), and 424–807 (SENK…EPKT). Residues 40–54 (LSGSSSEPLENNSSL) show a composition bias toward low complexity. Residues 57–67 (STDDPSVEIRS) are compositionally biased toward basic and acidic residues. Positions 77 to 86 (NLLSDQNITI) are enriched in polar residues. Residues 116–126 (SDAQSSVPSFS) show a composition bias toward low complexity. The segment covering 127–140 (EIHDGMSEEELDKE) has biased composition (basic and acidic residues). Polar residues-rich tracts occupy residues 330-349 (TSTL…TDTS) and 370-380 (TSALSNSQNPS). Positions 429–440 (ESAVASESSLSE) are enriched in low complexity. Basic and acidic residues-rich tracts occupy residues 467-485 (NKAE…DKSE) and 512-556 (NKAE…KADD). The span at 558-567 (LPSNNKTEGY) shows a compositional bias: polar residues. Over residues 587–596 (VIPPRVPTPV) the composition is skewed to pro residues. A compositionally biased stretch (basic and acidic residues) spans 622–635 (SSKKPEIFHERHIP). Positions 642 to 669 (NKPSKNNILKSTQVPVTPKQKSSTANKG) are enriched in polar residues. Positions 702 to 711 (KEHKKDKQKK) are enriched in basic residues. Positions 715-725 (QISSSSKSASS) are enriched in low complexity. Basic and acidic residues predominate over residues 798 to 807 (SDEKSTEPKT).

It is found in the cytoplasm. In terms of biological role, has a role in establishing cell polarity. Also required for maintenance of cell wall integrity, sexual differentiation, calcium tolerance and cell morphology. Involved in Ras-MAPK signaling pathway at cell cortex. Has a role in meiosis. This chain is Protein zds1 (zds1), found in Schizosaccharomyces pombe (strain 972 / ATCC 24843) (Fission yeast).